A 412-amino-acid polypeptide reads, in one-letter code: Transforming growth factor beta-3 proprotein (412 aa).

The N-terminal stretch at 1–23 is a signal peptide; the sequence is MKMHLQRALVVLALLNFATVSLS. N-linked (GlcNAc...) asparagine glycans are attached at residues asparagine 74, asparagine 135, and asparagine 142. Residues 261–263 carry the Cell attachment site motif; sequence RGD. Position 293 is an N5-methylglutamine (glutamine 293). Disulfide bonds link cysteine 307/cysteine 316, cysteine 315/cysteine 378, cysteine 344/cysteine 409, and cysteine 348/cysteine 411.

The protein belongs to the TGF-beta family. In terms of assembly, interacts with ASPN. Latency-associated peptide: Homodimer; disulfide-linked. Latency-associated peptide: Interacts with Transforming growth factor beta-3 (TGF-beta-3) chain; interaction is non-covalent and maintains (TGF-beta-3) in a latent state. Latency-associated peptide: Interacts with LRRC32/GARP; leading to regulate activation of TGF-beta-3 and promote epithelial fusion during palate development. Latency-associated peptide: Interacts (via cell attachment site) with integrins, leading to release of the active TGF-beta-3. Transforming growth factor beta-3: Homodimer; disulfide-linked. Transforming growth factor beta-3: Interacts with TGF-beta receptors (TGFBR1 and TGFBR2), leading to signal transduction. In terms of processing, transforming growth factor beta-3 proprotein: The precursor proprotein is cleaved in the Golgi apparatus to form Transforming growth factor beta-3 (TGF-beta-3) and Latency-associated peptide (LAP) chains, which remain non-covalently linked, rendering TGF-beta-3 inactive. Post-translationally, methylated at Gln-293 by N6AMT1.

The protein resides in the secreted. Its subcellular location is the extracellular space. The protein localises to the extracellular matrix. In terms of biological role, transforming growth factor beta-3 proprotein: Precursor of the Latency-associated peptide (LAP) and Transforming growth factor beta-3 (TGF-beta-3) chains, which constitute the regulatory and active subunit of TGF-beta-3, respectively. Functionally, required to maintain the Transforming growth factor beta-3 (TGF-beta-3) chain in a latent state during storage in extracellular matrix. Associates non-covalently with TGF-beta-3 and regulates its activation via interaction with 'milieu molecules', such as LTBP1 and LRRC32/GARP, that control activation of TGF-beta-3. Interaction with integrins results in distortion of the Latency-associated peptide chain and subsequent release of the active TGF-beta-3. Transforming growth factor beta-3: Multifunctional protein that regulates embryogenesis and cell differentiation and is required in various processes such as secondary palate development. Activation into mature form follows different steps: following cleavage of the proprotein in the Golgi apparatus, Latency-associated peptide (LAP) and Transforming growth factor beta-3 (TGF-beta-3) chains remain non-covalently linked rendering TGF-beta-3 inactive during storage in extracellular matrix. At the same time, LAP chain interacts with 'milieu molecules', such as LTBP1 and LRRC32/GARP that control activation of TGF-beta-3 and maintain it in a latent state during storage in extracellular milieus. TGF-beta-3 is released from LAP by integrins: integrin-binding results in distortion of the LAP chain and subsequent release of the active TGF-beta-3. Once activated following release of LAP, TGF-beta-3 acts by binding to TGF-beta receptors (TGFBR1 and TGFBR2), which transduce signal. In Homo sapiens (Human), this protein is Transforming growth factor beta-3 proprotein (TGFB3).